A 451-amino-acid polypeptide reads, in one-letter code: Lipase member H (451 aa).

The signal sequence occupies residues 1 to 16 (MLRLCFFISFMCLVKS). Asparagine 66 is a glycosylation site (N-linked (GlcNAc...) asparagine). The Nucleophile role is filled by serine 154. Aspartate 178 functions as the Charge relay system in the catalytic mechanism. A disulfide bridge links cysteine 233 with cysteine 246. Histidine 248 (charge relay system) is an active-site residue. 3 disulfide bridges follow: cysteine 270–cysteine 281, cysteine 284–cysteine 292, and cysteine 427–cysteine 446.

This sequence belongs to the AB hydrolase superfamily. Lipase family. As to quaternary structure, interacts with TTMP/C3orf52. In terms of tissue distribution, expressed in placenta and colon. Weakly expressed in small intestine.

It is found in the secreted. The protein localises to the cell membrane. The enzyme catalyses 1-hexadecanoyl-2-(9Z-octadecenoyl)-sn-glycero-3-phosphate + H2O = 2-(9Z-octadecenoyl)-sn-glycero-3-phosphate + hexadecanoate + H(+). Its function is as follows. Hydrolyzes specifically phosphatidic acid (PA) to produce 2-acyl lysophosphatidic acid (LPA; a potent bioactive lipid mediator) and fatty acid. Does not hydrolyze other phospholipids, like phosphatidylserine (PS), phosphatidylcholine (PC) and phosphatidylethanolamine (PE) or triacylglycerol (TG). This is Lipase member H (Liph) from Mus musculus (Mouse).